Reading from the N-terminus, the 295-residue chain is Acetyl-coenzyme A carboxylase carboxyl transferase subunit beta (295 aa).

The disordered stretch occupies residues 1–20 (MSWLSKLMPSGIRTENTPAK). The CoA carboxyltransferase N-terminal domain occupies 28 to 295 (LWEKCSNCGS…QPHPQDADAA (268 aa)). Cys32, Cys35, Cys51, and Cys54 together coordinate Zn(2+). Residues 32 to 54 (CSNCGSALYGPELEENLEVCPKC) form a C4-type zinc finger.

The protein belongs to the AccD/PCCB family. Acetyl-CoA carboxylase is a heterohexamer composed of biotin carboxyl carrier protein (AccB), biotin carboxylase (AccC) and two subunits each of ACCase subunit alpha (AccA) and ACCase subunit beta (AccD). Zn(2+) is required as a cofactor.

The protein localises to the cytoplasm. The catalysed reaction is N(6)-carboxybiotinyl-L-lysyl-[protein] + acetyl-CoA = N(6)-biotinyl-L-lysyl-[protein] + malonyl-CoA. It participates in lipid metabolism; malonyl-CoA biosynthesis; malonyl-CoA from acetyl-CoA: step 1/1. In terms of biological role, component of the acetyl coenzyme A carboxylase (ACC) complex. Biotin carboxylase (BC) catalyzes the carboxylation of biotin on its carrier protein (BCCP) and then the CO(2) group is transferred by the transcarboxylase to acetyl-CoA to form malonyl-CoA. The chain is Acetyl-coenzyme A carboxylase carboxyl transferase subunit beta from Xanthomonas euvesicatoria pv. vesicatoria (strain 85-10) (Xanthomonas campestris pv. vesicatoria).